The sequence spans 268 residues: MERYESLFAQLKERKEGAFVPFVTLGDPGIEQSLKIIDTLIEAGADALELGIPFSDPLADGPTIQNATLRAFAAGVTPAQCFEMLALIRQKHPTIPIGLLMYANLVFNKGIDEFYAQCEKVGVDSVLVADVPIEESAPFRQAALRHNVAPIFICPPNADDDLLRQIASYGRGYTYLLSRAGVTGAENRAALPLNHLVAKLKEYNAAPPLQGFGISAPDQVKAAIDAGAAGAISGSAIVKIIEQHINEPEKMLAALKVFVQPMKAATRS.

Active-site proton acceptor residues include glutamate 49 and aspartate 60.

This sequence belongs to the TrpA family. Tetramer of two alpha and two beta chains.

The enzyme catalyses (1S,2R)-1-C-(indol-3-yl)glycerol 3-phosphate + L-serine = D-glyceraldehyde 3-phosphate + L-tryptophan + H2O. The protein operates within amino-acid biosynthesis; L-tryptophan biosynthesis; L-tryptophan from chorismate: step 5/5. In terms of biological role, the alpha subunit is responsible for the aldol cleavage of indoleglycerol phosphate to indole and glyceraldehyde 3-phosphate. The polypeptide is Tryptophan synthase alpha chain (Escherichia coli (strain SE11)).